Here is a 181-residue protein sequence, read N- to C-terminus: ATP synthase subunit delta (181 aa).

It belongs to the ATPase delta chain family. In terms of assembly, F-type ATPases have 2 components, F(1) - the catalytic core - and F(0) - the membrane proton channel. F(1) has five subunits: alpha(3), beta(3), gamma(1), delta(1), epsilon(1). F(0) has three main subunits: a(1), b(2) and c(10-14). The alpha and beta chains form an alternating ring which encloses part of the gamma chain. F(1) is attached to F(0) by a central stalk formed by the gamma and epsilon chains, while a peripheral stalk is formed by the delta and b chains.

It localises to the cell membrane. Its function is as follows. F(1)F(0) ATP synthase produces ATP from ADP in the presence of a proton or sodium gradient. F-type ATPases consist of two structural domains, F(1) containing the extramembraneous catalytic core and F(0) containing the membrane proton channel, linked together by a central stalk and a peripheral stalk. During catalysis, ATP synthesis in the catalytic domain of F(1) is coupled via a rotary mechanism of the central stalk subunits to proton translocation. This protein is part of the stalk that links CF(0) to CF(1). It either transmits conformational changes from CF(0) to CF(1) or is implicated in proton conduction. The chain is ATP synthase subunit delta from Clostridioides difficile (strain 630) (Peptoclostridium difficile).